The sequence spans 189 residues: GMP synthase [glutamine-hydrolyzing] subunit A (189 aa).

One can recognise a Glutamine amidotransferase type-1 domain in the interval Lys-5 to Tyr-189. Cys-79 serves as the catalytic Nucleophile. Catalysis depends on residues His-166 and Glu-168.

As to quaternary structure, heterodimer composed of a glutamine amidotransferase subunit (A) and a GMP-binding subunit (B).

It catalyses the reaction XMP + L-glutamine + ATP + H2O = GMP + L-glutamate + AMP + diphosphate + 2 H(+). It participates in purine metabolism; GMP biosynthesis; GMP from XMP (L-Gln route): step 1/1. In terms of biological role, catalyzes the synthesis of GMP from XMP. The polypeptide is GMP synthase [glutamine-hydrolyzing] subunit A (Methanosarcina barkeri (strain Fusaro / DSM 804)).